A 379-amino-acid polypeptide reads, in one-letter code: Mannitol-1-phosphate 5-dehydrogenase (379 aa).

3–14 provides a ligand contact to NAD(+); it reads AVHFGAGNIGRG.

Belongs to the mannitol dehydrogenase family.

It catalyses the reaction D-mannitol 1-phosphate + NAD(+) = beta-D-fructose 6-phosphate + NADH + H(+). This chain is Mannitol-1-phosphate 5-dehydrogenase, found in Anoxybacillus flavithermus (strain DSM 21510 / WK1).